Here is a 262-residue protein sequence, read N- to C-terminus: MAQPVPRLSIPAALALGSAALGAAFATGLLLGKRWPPWGSRRQERLLPPEDNPLWQYLLSRSMREHPALRSLRLLTLEQPQGDSMMTCEQAQLLANLARLIKAKKALDLGTFTGYSALALALALPEAGRVVTCEVDAEPPKLGRPMWKQAEVEQKIDLRLQPALQTLDELLAAGEAGTFDIAVVDADKENCTAYYERCLQLLRPGGVLAVLRVLWRGEVLQPQPRNKTVECVRNLNERILRDARVYISLLPLDDGLSLAFKI.

A helical; Signal-anchor for type II membrane protein membrane pass occupies residues 12–32 (AALALGSAALGAAFATGLLLG). S-adenosyl-L-methionine contacts are provided by residues D108, 110–111 (GT), S116, E134, V135, A163, D185, D187, and Y194.

Belongs to the class I-like SAM-binding methyltransferase superfamily. Cation-dependent O-methyltransferase family. As to quaternary structure, homodimer.

The protein resides in the membrane. Its function is as follows. Putative O-methyltransferase. The protein is Catechol O-methyltransferase domain-containing protein 1 (Comtd1) of Mus musculus (Mouse).